The following is a 513-amino-acid chain: MEEYEAQLLVVEQALENAADEAQRQDLLALKNNLQELLALTRDTEDGAPTDELPQQGDDLDDELQRLRSELNDLEAAGSSQTALDEERQLADLRTKYTAMVGEKCSAPHEHSWGTCYHNALICGVDDEVVMSSEGVLDARLRVLFTNPTHREMLPCSYYLEGECRFDETKCRFSHGALVTGSSIRKYNPPDFHKLCRSRPVFALLPDRLWHRGRVLCVNFVEQVCRVRLDGQDHKERERDFKFEELYPLTTDQEEDDELSSEESNSSMNNESSDEAESDMDDLEEARRARMVELSLFTFKPTERLGAWEEFTRGIGSKLMEKMGYIHGTGLGSDGRGIVTPVSAQILPQGRSLDACMELREAANGDKDYFSVERKLKRAQRRQRKADEKAYVRESQRVDVFTFLNDSVLAPGESSQQGEQVAKKVKTNELQQHSTKTLNVETVRIADEIRRKQRDMAKVKQSLDRNSGDAQLQKRLQVQMQSHKQELATLQAQERSLSKEQQTRKSKNKMFEF.

The C3H1-type zinc-finger motif lies at 155–178 (PCSYYLEGECRFDETKCRFSHGAL). The segment covering 252-261 (DQEEDDELSS) has biased composition (acidic residues). Positions 252–282 (DQEEDDELSSEESNSSMNNESSDEAESDMDD) are disordered. Residues 262–271 (EESNSSMNNE) are compositionally biased toward low complexity. The segment covering 272–282 (SSDEAESDMDD) has biased composition (acidic residues). The 47-residue stretch at 312 to 358 (TRGIGSKLMEKMGYIHGTGLGSDGRGIVTPVSAQILPQGRSLDACME) folds into the G-patch domain. Residues 478 to 495 (VQMQSHKQELATLQAQER) are compositionally biased toward polar residues. The disordered stretch occupies residues 478 to 513 (VQMQSHKQELATLQAQERSLSKEQQTRKSKNKMFEF). Residues 496–513 (SLSKEQQTRKSKNKMFEF) are compositionally biased toward basic and acidic residues.

It is found in the nucleus. Transcription repressor. This is Zinc finger CCCH-type with G patch domain-containing protein from Drosophila erecta (Fruit fly).